A 336-amino-acid polypeptide reads, in one-letter code: Galactose/methyl galactoside import permease protein MglC (336 aa).

Helical transmembrane passes span 17 to 37, 53 to 73, 107 to 127, 128 to 148, 181 to 201, 231 to 251, 257 to 277, and 306 to 326; these read AIYF…PTFL, LIIA…LSAG, VVIL…GLVI, AYLN…IYGF, FKLS…WIMW, LVAI…LEAG, TNNL…VGGV, and IGVN…LAVA.

The protein belongs to the binding-protein-dependent transport system permease family. AraH/RbsC subfamily. As to quaternary structure, the complex is composed of one ATP-binding protein (MglA), two transmembrane proteins (MglC) and a solute-binding protein (MglB).

It is found in the cell inner membrane. Its function is as follows. Part of the ABC transporter complex MglABC involved in galactose/methyl galactoside import. Probably responsible for the translocation of the substrate across the membrane. In Haemophilus influenzae (strain ATCC 51907 / DSM 11121 / KW20 / Rd), this protein is Galactose/methyl galactoside import permease protein MglC (mglC).